Here is a 100-residue protein sequence, read N- to C-terminus: Small ribosomal subunit protein uS14c (100 aa).

Belongs to the universal ribosomal protein uS14 family. In terms of assembly, part of the 30S ribosomal subunit.

Its subcellular location is the plastid. The protein localises to the chloroplast. Binds 16S rRNA, required for the assembly of 30S particles. This Tetradesmus obliquus (Green alga) protein is Small ribosomal subunit protein uS14c.